The primary structure comprises 266 residues: Apolipoprotein A-I (266 aa).

The N-terminal stretch at 1–18 is a signal peptide; the sequence is MKAVVLTLAVLFLTGSQA. 2 consecutive repeat copies span residues 67-88 and 89-110. The interval 67–266 is 10 X approximate tandem repeats; it reads LKLLDNWDTL…DEATKKLNAQ (200 aa). At Met-109 the chain carries Methionine sulfoxide. The 3; half-length repeat unit spans residues 111–121; it reads KDLEEVKQKVQ. Tandem repeats lie at residues 122–143, 144–165, 166–187, 188–209, and 210–231. Residues 232–242 form a 9; half-length repeat; the sequence is PALEDLRQGLL. Residues 243–266 form repeat 10; sequence PVLESFKVGLMAIVDEATKKLNAQ.

Belongs to the apolipoprotein A1/A4/E family. Homodimer. Interacts with APOA1BP and CLU. Component of a sperm activating protein complex (SPAP), consisting of APOA1, an immunoglobulin heavy chain, an immunoglobulin light chain and albumin. Interacts with NDRG1. Interacts with SCGB3A2. Interacts with NAXE and YJEFN3. Post-translationally, glycosylated. In terms of processing, palmitoylated. Phosphorylation sites are present in the extracellular medium.

It localises to the secreted. In terms of biological role, participates in the reverse transport of cholesterol from tissues to the liver for excretion by promoting cholesterol efflux from tissues and by acting as a cofactor for the lecithin cholesterol acyltransferase (LCAT). As part of the SPAP complex, activates spermatozoa motility. The chain is Apolipoprotein A-I (APOA1) from Acinonyx jubatus (Cheetah).